The following is an 84-amino-acid chain: Cell division topological specificity factor (84 aa).

This sequence belongs to the MinE family.

In terms of biological role, prevents the cell division inhibition by proteins MinC and MinD at internal division sites while permitting inhibition at polar sites. This ensures cell division at the proper site by restricting the formation of a division septum at the midpoint of the long axis of the cell. The protein is Cell division topological specificity factor of Azotobacter vinelandii (strain DJ / ATCC BAA-1303).